The following is a 118-amino-acid chain: Protein TusC (118 aa).

It belongs to the DsrF/TusC family. As to quaternary structure, heterohexamer, formed by a dimer of trimers. The hexameric TusBCD complex contains 2 copies each of TusB, TusC and TusD. The TusBCD complex interacts with TusE.

The protein resides in the cytoplasm. Functionally, part of a sulfur-relay system required for 2-thiolation of 5-methylaminomethyl-2-thiouridine (mnm(5)s(2)U) at tRNA wobble positions. This chain is Protein TusC, found in Salmonella typhimurium (strain LT2 / SGSC1412 / ATCC 700720).